The sequence spans 486 residues: Ribulose bisphosphate carboxylase large chain, chromosomal (486 aa).

Substrate contacts are provided by asparagine 126 and threonine 176. The active-site Proton acceptor is the lysine 178. A substrate-binding site is contributed by lysine 180. Mg(2+) contacts are provided by lysine 204, aspartate 206, and glutamate 207. An N6-carboxylysine modification is found at lysine 204. Histidine 296 functions as the Proton acceptor in the catalytic mechanism. Substrate is bound by residues arginine 297, histidine 329, and serine 381.

The protein belongs to the RuBisCO large chain family. Type I subfamily. Heterohexadecamer of 8 large chains and 8 small chains; disulfide-linked. The disulfide link is formed within the large subunit homodimers. It depends on Mg(2+) as a cofactor. Post-translationally, the disulfide bond which can form between Cys-278 in the large chain dimeric partners within the hexadecamer appears to be associated with oxidative stress and protein turnover.

It carries out the reaction 2 (2R)-3-phosphoglycerate + 2 H(+) = D-ribulose 1,5-bisphosphate + CO2 + H2O. The catalysed reaction is D-ribulose 1,5-bisphosphate + O2 = 2-phosphoglycolate + (2R)-3-phosphoglycerate + 2 H(+). RuBisCO catalyzes two reactions: the carboxylation of D-ribulose 1,5-bisphosphate, the primary event in carbon dioxide fixation, as well as the oxidative fragmentation of the pentose substrate. Both reactions occur simultaneously and in competition at the same active site. This Cupriavidus necator (strain ATCC 17699 / DSM 428 / KCTC 22496 / NCIMB 10442 / H16 / Stanier 337) (Ralstonia eutropha) protein is Ribulose bisphosphate carboxylase large chain, chromosomal (cbbL1).